Consider the following 609-residue polypeptide: Mitochondrial nucleoid-associated protein 1 (609 aa).

Topologically, residues 1 to 554 are extracellular; the sequence is MSDNPPRMEV…CNTTIRKSGF (554 aa). Disordered regions lie at residues 133–163 and 406–425; these read QEET…GESR and SPEG…QASH. Over residues 146 to 161 the composition is skewed to basic and acidic residues; that stretch reads TSPKRELAEDLPKSGE. Residues 555-571 traverse the membrane as a helical segment; sequence GGITMLSTGYFVLCCSW. Topologically, residues 572-609 are cytoplasmic; that stretch reads SFRRLKKLCRPLPWKSTVPPSVGVAKTTGDCRSKTCLD.

The protein resides in the mitochondrion inner membrane. The protein localises to the mitochondrion matrix. It is found in the mitochondrion nucleoid. In terms of biological role, critical regulator of mitochondrial DNA (mtDNA) abundance. Binds dsDNA throughout the mitochondrial genome without sequence specificity and controls mtDNA copy number by promoting its replication. Also plays important roles in mitochondrial metabolism and cell proliferation. This Pongo abelii (Sumatran orangutan) protein is Mitochondrial nucleoid-associated protein 1.